We begin with the raw amino-acid sequence, 354 residues long: Major egg antigen (354 aa).

The interval 1–21 is disordered; the sequence is MSGGKQHNAVSIPVNREQRSF. 2 consecutive sHSP domains span residues 122-233 and 251-354; these read SVND…VAVR and AKGV…AITH.

This sequence belongs to the small heat shock protein (HSP20) family.

The chain is Major egg antigen from Schistosoma mansoni (Blood fluke).